The sequence spans 659 residues: Mannosyl-oligosaccharide 1,2-alpha-mannosidase IA (659 aa).

Over 1–48 the chain is Cytoplasmic; that stretch reads MPVGGLLPLFSSPAGGGLGGGLGGGLGGGGGGGGRKGSGPSAFRLTEK. A helical; Signal-anchor for type II membrane protein membrane pass occupies residues 49 to 69; the sequence is FVLLLVFSAFITLCFGAIFFL. The Lumenal portion of the chain corresponds to 70 to 659; that stretch reads PDSSKLLSGV…NIKKVEDNEK (590 aa). Positions 88-121 are disordered; sequence QPAADHKPGPGARAEDAADGRARPGEEGAPGDPA. Positions 91–113 are enriched in basic and acidic residues; that stretch reads ADHKPGPGARAEDAADGRARPGE. Residues Cys482 and Cys514 are joined by a disulfide bond. Catalysis depends on Glu528, which acts as the Proton donor. Thr639 provides a ligand contact to Ca(2+).

It belongs to the glycosyl hydrolase 47 family. It depends on Ca(2+) as a cofactor.

The protein resides in the endoplasmic reticulum membrane. The enzyme catalyses N(4)-(alpha-D-Man-(1-&gt;2)-alpha-D-Man-(1-&gt;2)-alpha-D-Man-(1-&gt;3)-[alpha-D-Man-(1-&gt;2)-alpha-D-Man-(1-&gt;3)-[alpha-D-Man-(1-&gt;2)-alpha-D-Man-(1-&gt;6)]-alpha-D-Man-(1-&gt;6)]-beta-D-Man-(1-&gt;4)-beta-D-GlcNAc-(1-&gt;4)-beta-D-GlcNAc)-L-asparaginyl-[protein] (N-glucan mannose isomer 9A1,2,3B1,2,3) + 4 H2O = N(4)-(alpha-D-Man-(1-&gt;3)-[alpha-D-Man-(1-&gt;3)-[alpha-D-Man-(1-&gt;6)]-alpha-D-Man-(1-&gt;6)]-beta-D-Man-(1-&gt;4)-beta-D-GlcNAc-(1-&gt;4)-beta-D-GlcNAc)-L-asparaginyl-[protein] (N-glucan mannose isomer 5A1,2) + 4 beta-D-mannose. It catalyses the reaction N(4)-(alpha-D-Man-(1-&gt;2)-alpha-D-Man-(1-&gt;2)-alpha-D-Man-(1-&gt;3)-[alpha-D-Man-(1-&gt;3)-[alpha-D-Man-(1-&gt;2)-alpha-D-Man-(1-&gt;6)]-alpha-D-Man-(1-&gt;6)]-beta-D-Man-(1-&gt;4)-beta-D-GlcNAc-(1-&gt;4)-beta-D-GlcNAc)-L-asparaginyl-[protein] (N-glucan mannose isomer 8A1,2,3B1,3) + 3 H2O = N(4)-(alpha-D-Man-(1-&gt;3)-[alpha-D-Man-(1-&gt;3)-[alpha-D-Man-(1-&gt;6)]-alpha-D-Man-(1-&gt;6)]-beta-D-Man-(1-&gt;4)-beta-D-GlcNAc-(1-&gt;4)-beta-D-GlcNAc)-L-asparaginyl-[protein] (N-glucan mannose isomer 5A1,2) + 3 beta-D-mannose. It participates in protein modification; protein glycosylation. With respect to regulation, inhibited by both 1-deoxymannojirimycin and kifunensine. Functionally, involved in the maturation of Asn-linked oligosaccharides. Progressively trim alpha-1,2-linked mannose residues from Man(9)GlcNAc(2) to produce Man(5)GlcNAc(2). The protein is Mannosyl-oligosaccharide 1,2-alpha-mannosidase IA (MAN1A1) of Sus scrofa (Pig).